The chain runs to 445 residues: tRNA(Ile)-lysidine synthase (445 aa).

30-35 (SGGLDS) provides a ligand contact to ATP.

Belongs to the tRNA(Ile)-lysidine synthase family.

It localises to the cytoplasm. It carries out the reaction cytidine(34) in tRNA(Ile2) + L-lysine + ATP = lysidine(34) in tRNA(Ile2) + AMP + diphosphate + H(+). Ligates lysine onto the cytidine present at position 34 of the AUA codon-specific tRNA(Ile) that contains the anticodon CAU, in an ATP-dependent manner. Cytidine is converted to lysidine, thus changing the amino acid specificity of the tRNA from methionine to isoleucine. In Alkalilimnicola ehrlichii (strain ATCC BAA-1101 / DSM 17681 / MLHE-1), this protein is tRNA(Ile)-lysidine synthase.